A 156-amino-acid polypeptide reads, in one-letter code: Pheromone-binding protein Gp-9 (156 aa).

The N-terminal stretch at 1-19 (MKTFVFHIFIFALVAFASA) is a signal peptide. Cystine bridges form between cysteine 37-cysteine 77, cysteine 73-cysteine 129, and cysteine 118-cysteine 138.

Belongs to the PBP/GOBP family. Homodimer.

It localises to the secreted. Functionally, colony queen number, a major feature of social organization, is associated with worker genotype for Gp-9. Colonies are headed by either a single reproductive queen (monogyne form) or multiple queens (polygyne form). Differences in worker Gp-9 genotypes between social forms may cause differences in workers' abilities to recognize queens and regulate their numbers. In Solenopsis globularia littoralis (Fire ant), this protein is Pheromone-binding protein Gp-9.